The chain runs to 432 residues: Phosphomethylpyrimidine synthase (432 aa).

Substrate is bound by residues Asn66, Met95, Tyr124, His163, 185-187 (SRG), 226-229 (DGLR), and Glu265. His269 lines the Zn(2+) pocket. Tyr292 is a binding site for substrate. Residue His333 participates in Zn(2+) binding. Residues Cys409, Cys412, and Cys416 each coordinate [4Fe-4S] cluster.

The protein belongs to the ThiC family. The cofactor is [4Fe-4S] cluster.

The catalysed reaction is 5-amino-1-(5-phospho-beta-D-ribosyl)imidazole + S-adenosyl-L-methionine = 4-amino-2-methyl-5-(phosphooxymethyl)pyrimidine + CO + 5'-deoxyadenosine + formate + L-methionine + 3 H(+). It participates in cofactor biosynthesis; thiamine diphosphate biosynthesis. Catalyzes the synthesis of the hydroxymethylpyrimidine phosphate (HMP-P) moiety of thiamine from aminoimidazole ribotide (AIR) in a radical S-adenosyl-L-methionine (SAM)-dependent reaction. This is Phosphomethylpyrimidine synthase from Moorella thermoacetica (strain ATCC 39073 / JCM 9320).